We begin with the raw amino-acid sequence, 804 residues long: Leucine--tRNA ligase (804 aa).

The short motif at 39-50 (PYPSGKGLHVGH) is the 'HIGH' region element. Residues 573 to 577 (KMSKS) carry the 'KMSKS' region motif. Lys576 contributes to the ATP binding site.

The protein belongs to the class-I aminoacyl-tRNA synthetase family.

It is found in the cytoplasm. The enzyme catalyses tRNA(Leu) + L-leucine + ATP = L-leucyl-tRNA(Leu) + AMP + diphosphate. This Lactobacillus delbrueckii subsp. bulgaricus (strain ATCC 11842 / DSM 20081 / BCRC 10696 / JCM 1002 / NBRC 13953 / NCIMB 11778 / NCTC 12712 / WDCM 00102 / Lb 14) protein is Leucine--tRNA ligase.